Consider the following 1184-residue polypeptide: Non-receptor tyrosine-protein kinase TYK2 (1184 aa).

The 398-residue stretch at 33 to 430 (LMVLLHWPGP…GYFRLTADSS (398 aa)) folds into the FERM domain. Residues 294 to 368 (CYIQNSGQTA…KAGEHLTESP (75 aa)) are disordered. Position 295 is a phosphotyrosine (Tyr295). The SH2; atypical domain occupies 449–529 (GIHGPLMDPF…GRSFASLGDL (81 aa)). Ser525 carries the post-translational modification Phosphoserine. The Protein kinase 1 domain maps to 589–866 (ITQLSHLGQG…RTILRDLTRL (278 aa)). At Tyr604 the chain carries Phosphotyrosine. Phosphoserine is present on Ser881. The Protein kinase 2 domain occupies 894–1166 (LKKIRDLGEG…PTFQNLVPIL (273 aa)). Residues 900–908 (LGEGHFGKV) and Lys927 each bind ATP. The active-site Proton acceptor is Asp1020. A Phosphotyrosine; by autocatalysis modification is found at Tyr1051. Tyr1052 carries the phosphotyrosine modification.

It belongs to the protein kinase superfamily. Tyr protein kinase family. JAK subfamily. In terms of assembly, interacts (via FERM domain) with JAKMIP1. Interacts with PIK3R1; this interaction is important for cell migration. Interacts with MPL/TPOR. Phosphorylation by JAK1 at Tyr-1051 and Tyr-1052 induces kinase activation.

It catalyses the reaction L-tyrosyl-[protein] + ATP = O-phospho-L-tyrosyl-[protein] + ADP + H(+). The protein kinase 1 domain (also termed pseudokinase domain) mediates autoinhibition of the TYK2 kinase domain. Tyrosine kinase of the non-receptor type involved in numerous cytokines and interferons signaling, which regulates cell growth, development, cell migration, innate and adaptive immunity. Plays both structural and catalytic roles in numerous interleukins and interferons (IFN-alpha/beta) signaling. Associates with heterodimeric cytokine receptor complexes and activates STAT family members including STAT1, STAT3, STAT4 or STAT6. The heterodimeric cytokine receptor complexes are composed of (1) a TYK2-associated receptor chain (IFNAR1, IL12RB1, IL10RB or IL13RA1), and (2) a second receptor chain associated either with JAK1 or JAK2. In response to cytokine-binding to receptors, phosphorylates and activates receptors (IFNAR1, IL12RB1, IL10RB or IL13RA1), creating docking sites for STAT members. In turn, recruited STATs are phosphorylated by TYK2 (or JAK1/JAK2 on the second receptor chain), form homo- and heterodimers, translocate to the nucleus, and regulate cytokine/growth factor responsive genes. Negatively regulates STAT3 activity by promototing phosphorylation at a specific tyrosine that differs from the site used for signaling. In Mus musculus (Mouse), this protein is Non-receptor tyrosine-protein kinase TYK2.